We begin with the raw amino-acid sequence, 164 residues long: Two-component response regulator ARR16 (164 aa).

In terms of domain architecture, Response regulatory spans 30–160 (HVLAVDDNLI…DVEKLKCHLM (131 aa)). Position 93 is a 4-aspartylphosphate (D93).

This sequence belongs to the ARR family. Type-A subfamily. Post-translationally, two-component system major event consists of a His-to-Asp phosphorelay between a sensor histidine kinase (HK) and a response regulator (RR). In plants, the His-to-Asp phosphorelay involves an additional intermediate named Histidine-containing phosphotransfer protein (HPt). This multistep phosphorelay consists of a His-Asp-His-Asp sequential transfer of a phosphate group between first a His and an Asp of the HK protein, followed by the transfer to a conserved His of the HPt protein and finally the transfer to an Asp in the receiver domain of the RR protein.

The protein localises to the nucleus. In terms of biological role, functions as a response regulator involved in His-to-Asp phosphorelay signal transduction system. Phosphorylation of the Asp residue in the receiver domain activates the ability of the protein to promote the transcription of target genes. Type-A response regulators seem to act as negative regulators of the cytokinin signaling. The chain is Two-component response regulator ARR16 (ARR16) from Arabidopsis thaliana (Mouse-ear cress).